The primary structure comprises 580 residues: MHNVSTTTTGFPLAKILTSTELGDNTIQAANDAANKLFSLTIADLTANQNINTTNAHSTSNILIPELKAPKSLNASSQLTLLIGNLIQILGEKSLTALTNKITAWKSQQQARQQKNLEFSDKINTLLSETEGLTRDYEKQINKLKNADSKIKDLENKINQIQTRLSELDPESPEKKKLSREEIQLTIKKDAAVKDRTLIEQKTLSIHSKLTDKSMQLEKEIDSFSAFSNTASAEQLSTQQKSLTGLASVTQLMATFIQLVGKNNEESLKNDLALFQSLQESRKTEMERKSDEYAAEVRKAEELNRVMGCVGKILGALLTIVSVVAAAFSGGASLALAAVGLALMVTDAIVQAATGNSFMEQALNPIMKAVIEPLIKLLSDAFTKMLEGLGVDSKKAKMIGSILGAIAGALVLVAAVVLVATVGKQAAAKLAENIGKIIGKTLTDLIPKFLKNFSSQLDDLITNAVARLNKFLGAAGDEVISKQIISTHLNQAVLLGESVNSATQAGGSVASAVFQNSASTNLADLTLSKYQVEQLSKYISEAIEKFGQLQEVIADLLASMSNSQANRTDVAKAILQQTTA.

IpgC chaperone binding domain regions lie at residues K15 to L45 and I51 to S72. The segment at N61 to P70 is mediates interaction with human MAD2L2. The stretch at A104–F224 forms a coiled coil. 2 helical membrane-spanning segments follow: residues I313–S333 and I399–V419.

This sequence belongs to the SctE/SipB/YopB family. The core secretion machinery of the T3SS is composed of approximately 20 different proteins, including cytoplasmic components, a base, an export apparatus and a needle. This subunit is involved in the formation of a pore, called the translocon, in host membrane. Interacts with IpaC/SctB. Interacts with the needle tip protein IpaD/SctA. Interacts with the molecular chaperone IpgC, which prevents premature association with IpaC/SctB within the cytoplasm of Shigella cells and protects IpaB/SctE from proteolysis. Interacts with the host protein ICE in the cytoplasm of infected macrophages. Interacts with human MAD2L2 in the G2/M phase of the cell cycle.

It localises to the secreted. The protein localises to the host membrane. Its subcellular location is the host cell. It is found in the host nucleus. With respect to regulation, interaction with the membrane is affected by the pH. IpaB/SctE is more efficient in destabilizing the membrane at pH 5.0 than at neutral pH. Component of the type III secretion system (T3SS), also called injectisome, which is used to inject bacterial effector proteins into eukaryotic host cells. IpaB/SctE and IpaC/SctB are inserted into the host membrane where they form a pore and allow the translocation of effector proteins into the cytosol of target cells. Interaction with IpaD/SctA at needle tips leads to the formation of the MxiH/SctF-IpaD/SctA-IpaB/SctE ternary complex, which is essential for host cell sensing. Interaction of IpaB/SctE with host membrane lipids promotes recruitment of IpaC/SctB at the needle tip concomitant with translocon insertion into the host membrane and type III secretion induction. In terms of biological role, required for efficient dissemination. Necessary for lysis of the two cellular membranes that surround bacteria in protrusions during cell-to-cell spread. Is sufficient to induce macrophage apoptosis through activation of the interleukin-1 beta converting enzyme (ICE) in infected macrophages. In epithelial cells, causes cell-cycle arrest by targeting host MAD2L2, an anaphase-promoting complex/cyclosome (APC) inhibitor. The protein is Type 3 secretion system translocon protein SctE of Shigella flexneri.